The sequence spans 360 residues: Plastid lipid-associated protein 3, chloroplastic (360 aa).

Residues 1–37 (MATLFTVTTTSRPFPANPSKTFSPSISLKPNALSFSL) are compositionally biased toward polar residues. Residues 1–52 (MATLFTVTTTSRPFPANPSKTFSPSISLKPNALSFSLTHHRPPRPLRFSKIR) constitute a chloroplast transit peptide. The interval 1–130 (MATLFTVTTT…EWEEREADDG (130 aa)) is disordered. Basic residues predominate over residues 38–50 (THHRPPRPLRFSK). The span at 53–68 (SSLPSESDSEPEGGYS) shows a compositional bias: low complexity. Acidic residues predominate over residues 117 to 127 (TNEDEWEEREA).

It belongs to the PAP/fibrillin family. As to expression, ubiquitous expression among various organs, but only at a very low level.

It localises to the plastid. The protein resides in the chloroplast. This chain is Plastid lipid-associated protein 3, chloroplastic (PAP3), found in Brassica campestris (Field mustard).